The chain runs to 518 residues: Phenylacetate 2-hydroxylase (518 aa).

Cys-437 contributes to the heme binding site.

It belongs to the cytochrome P450 family.

The enzyme catalyses 2-phenylacetate + reduced [NADPH--hemoprotein reductase] + O2 = (2-hydroxyphenyl)acetate + oxidized [NADPH--hemoprotein reductase] + H2O + H(+). It functions in the pathway aromatic compound metabolism; phenylacetate degradation. Functionally, catalyzes the hydroxylation of phenylacetate to 2-hydroxyphenylacetate in the homogentisate pathway. The homogentisate pathway is used to catabolize phenylacetate and use it as a carbon source. Can also catalyze the hydroxylation of 3-hydroxyphenylacetate to 2,5-dihydroxyphenylacetate (homogentisate) at low efficiency. The sequence is that of Phenylacetate 2-hydroxylase (phacA) from Emericella nidulans (Aspergillus nidulans).